The primary structure comprises 494 residues: MFLAKSIVCLALLAVANAQFDTNYASGRSGMVHLFEWKWDDIAAECENFLGPNGFAGVQVSPVNENAVKDSRPWWERYQPISYKLETRSGNEQQFASMVKRCNAVGVRTYVDVVFNHMAADGGTYGTGGSTASPSTKSFPGVPYSSLDFNPTCSINNYNDANQVRNCELVGLRDLNQGNSYVQDKVVEFLDHLIDLGVAGFRVDAAKHMWPADLAVIYGRLKTLNTDHGFNSGSKAYIVQEVIDMGGEAISKSEYTGLGAVTEFRHSDSIGKVFRGKDQLQYLTNWGTAWGFAASDRSLVFVDNHDNQRGHGAGGADVLTYKVPKQYKMASAFMLAHPFGTPRVMSSFSFSDTDQGPPTTDGHNIASPVFNSDNSCSGGWVCEHRWRQIYNMVAFRNAVGSDAIQNWWDNGSNQIAFSRGSRGFVAFNNDNYDLNSSLQTGLPAGTYCDVISGSKSGSSCTGKTVSVGSDGRASIYLGSSEDDGVLAIHVNAKL.

An N-terminal signal peptide occupies residues 1–18 (MFLAKSIVCLALLAVANA). A Pyrrolidone carboxylic acid modification is found at Q19. A disulfide bridge connects residues C46 and C102. N116, R165, and D174 together coordinate Ca(2+). C153 and C167 are disulfide-bonded. Residue R202 participates in chloride binding. D204 functions as the Nucleophile in the catalytic mechanism. Position 208 (H208) interacts with Ca(2+). E241 (proton donor) is an active-site residue. Chloride contacts are provided by N304 and R343. Cystine bridges form between C376-C382 and C448-C460.

The protein belongs to the glycosyl hydrolase 13 family. In terms of assembly, monomer. Ca(2+) serves as cofactor. Chloride is required as a cofactor.

The enzyme catalyses Endohydrolysis of (1-&gt;4)-alpha-D-glucosidic linkages in polysaccharides containing three or more (1-&gt;4)-alpha-linked D-glucose units.. The chain is Alpha-amylase B (Amy-d) from Drosophila yakuba (Fruit fly).